Reading from the N-terminus, the 218-residue chain is MTDTTLIIRQLGIQDYQQVWQQMREFTDTRNALTPDEIWLVQHPAVFTQGQAGKPEHLLNPTDIPVVQSDRGGQITYHGLGQQIMYVLIDIKRHKANGSELNVRQLVTALEQSVVSTLADYGIKSYPKADAPGVYVNEQKICSLGLRIRKGCSFHGLALNINMDLSPFRQINPCGYIGLEMCQMADFIPTEQAQCDKVAPKLVTHFTQLLGYNDVTTY.

Residues 32–214 form the BPL/LPL catalytic domain; sequence ALTPDEIWLV…HFTQLLGYND (183 aa). Substrate is bound by residues 71-78, 143-145, and 156-158; these read RGGQITYH, SLG, and GLA. Cys174 functions as the Acyl-thioester intermediate in the catalytic mechanism.

This sequence belongs to the LipB family.

It is found in the cytoplasm. The catalysed reaction is octanoyl-[ACP] + L-lysyl-[protein] = N(6)-octanoyl-L-lysyl-[protein] + holo-[ACP] + H(+). It participates in protein modification; protein lipoylation via endogenous pathway; protein N(6)-(lipoyl)lysine from octanoyl-[acyl-carrier-protein]: step 1/2. Its function is as follows. Catalyzes the transfer of endogenously produced octanoic acid from octanoyl-acyl-carrier-protein onto the lipoyl domains of lipoate-dependent enzymes. Lipoyl-ACP can also act as a substrate although octanoyl-ACP is likely to be the physiological substrate. In Histophilus somni (strain 129Pt) (Haemophilus somnus), this protein is Octanoyltransferase.